The following is a 252-amino-acid chain: Metalloprotease LoiP (252 aa).

Residues 1–18 (MKIRALLVAMSVATVLTG) form the signal peptide. Cys19 carries N-palmitoyl cysteine lipidation. Residue Cys19 is the site of S-diacylglycerol cysteine attachment. A disulfide bridge connects residues Cys53 and Cys108. His130 is a binding site for Zn(2+). Glu131 is an active-site residue. Zn(2+) is bound by residues His134 and Glu189. The tract at residues 224-252 (RQSSMFDDHPASAERAQHIRDRMSADGIK) is disordered.

This sequence belongs to the peptidase M48B family. As to quaternary structure, interacts with Era and BepA. Zn(2+) is required as a cofactor. In terms of processing, the intramolecular disulfide bond improves the stability and the activity of LoiP. It forms even in the absence of the oxido-reductase DsbA.

The protein localises to the cell outer membrane. Functionally, metalloprotease that cleaves substrates preferentially between Phe-Phe residues. Plays a role in response to some stress conditions. Seems to regulate the expression of speB. This Escherichia coli (strain K12) protein is Metalloprotease LoiP (loiP).